Consider the following 153-residue polypeptide: Xanthine-guanine phosphoribosyltransferase (153 aa).

5-phospho-alpha-D-ribose 1-diphosphate-binding positions include 37-38 (RG), arginine 69, and 88-96 (DDLVDTGGT). Arginine 69 is a GMP binding site. Aspartate 89 is a binding site for Mg(2+). Positions 92 and 135 each coordinate guanine. Xanthine is bound by residues aspartate 92 and isoleucine 135. GMP is bound by residues 92–96 (DTGGT) and 134–135 (WI).

This sequence belongs to the purine/pyrimidine phosphoribosyltransferase family. XGPT subfamily. In terms of assembly, homotetramer. The cofactor is Mg(2+).

The protein resides in the cell inner membrane. It carries out the reaction GMP + diphosphate = guanine + 5-phospho-alpha-D-ribose 1-diphosphate. The enzyme catalyses XMP + diphosphate = xanthine + 5-phospho-alpha-D-ribose 1-diphosphate. The catalysed reaction is IMP + diphosphate = hypoxanthine + 5-phospho-alpha-D-ribose 1-diphosphate. Its pathway is purine metabolism; GMP biosynthesis via salvage pathway; GMP from guanine: step 1/1. The protein operates within purine metabolism; XMP biosynthesis via salvage pathway; XMP from xanthine: step 1/1. Purine salvage pathway enzyme that catalyzes the transfer of the ribosyl-5-phosphate group from 5-phospho-alpha-D-ribose 1-diphosphate (PRPP) to the N9 position of the 6-oxopurines guanine and xanthine to form the corresponding ribonucleotides GMP (guanosine 5'-monophosphate) and XMP (xanthosine 5'-monophosphate), with the release of PPi. To a lesser extent, also acts on hypoxanthine. The polypeptide is Xanthine-guanine phosphoribosyltransferase (Photorhabdus laumondii subsp. laumondii (strain DSM 15139 / CIP 105565 / TT01) (Photorhabdus luminescens subsp. laumondii)).